The chain runs to 599 residues: Glucose-6-phosphate 1-dehydrogenase 3, chloroplastic (599 aa).

Residues 1–18 (MSSLSCPTYRSRTSSSSP) show a composition bias toward low complexity. The segment at 1–23 (MSSLSCPTYRSRTSSSSPFLSNH) is disordered. The N-terminal 66 residues, 1-66 (MSSLSCPTYR…RSQRRSVQSS (66 aa)), are a transit peptide targeting the chloroplast. N-acetylvaline is present on valine 67. Residues 119–126 (GASGDLAK) and arginine 153 each bind NADP(+). The cysteines at positions 171 and 179 are disulfide-linked. Lysine 256 is an NADP(+) binding site. D-glucose 6-phosphate is bound by residues lysine 256, 286–290 (HYLGK), glutamate 324, and aspartate 343. The Proton acceptor role is filled by histidine 348. Lysine 441 serves as a coordination point for NADP(+). 2 residues coordinate D-glucose 6-phosphate: lysine 444 and arginine 449. 2 residues coordinate NADP(+): arginine 454 and arginine 483. Glutamine 485 serves as a coordination point for D-glucose 6-phosphate. NADP(+) is bound by residues 491 to 493 (YLK) and arginine 576.

The protein belongs to the glucose-6-phosphate dehydrogenase family. In terms of assembly, forms homodimer. Interacts with G6PD1. In terms of tissue distribution, expressed in roots, flowers and siliques.

It localises to the plastid. The protein resides in the chloroplast stroma. The catalysed reaction is D-glucose 6-phosphate + NADP(+) = 6-phospho-D-glucono-1,5-lactone + NADPH + H(+). The protein operates within carbohydrate degradation; pentose phosphate pathway; D-ribulose 5-phosphate from D-glucose 6-phosphate (oxidative stage): step 1/3. Its activity is regulated as follows. Regulated by metabolites. Post-translationally inactivated by cysteine-mediated redox modification via the ferredoxin-thioredoxin system in the light and this avoids futile cycles with photosynthetic CO2 fixation. Functionally, catalyzes the rate-limiting step of the oxidative pentose-phosphate pathway, which represents a route for the dissimilation of carbohydrates besides glycolysis. The main function of this enzyme is to provide reducing power (NADPH) and pentose phosphates for fatty acid and nucleic acid synthesis which are involved in membrane synthesis and cell division. This Arabidopsis thaliana (Mouse-ear cress) protein is Glucose-6-phosphate 1-dehydrogenase 3, chloroplastic.